The sequence spans 227 residues: Probable methylthioribulose-1-phosphate dehydratase (227 aa).

Cys-87 provides a ligand contact to substrate. Residues His-105 and His-107 each coordinate Zn(2+). Residue Glu-129 is the Proton donor/acceptor of the active site. A Zn(2+)-binding site is contributed by His-185.

The protein belongs to the aldolase class II family. MtnB subfamily. Zn(2+) is required as a cofactor.

It localises to the cytoplasm. The catalysed reaction is 5-(methylsulfanyl)-D-ribulose 1-phosphate = 5-methylsulfanyl-2,3-dioxopentyl phosphate + H2O. It functions in the pathway amino-acid biosynthesis; L-methionine biosynthesis via salvage pathway; L-methionine from S-methyl-5-thio-alpha-D-ribose 1-phosphate: step 2/6. Functionally, catalyzes the dehydration of methylthioribulose-1-phosphate (MTRu-1-P) into 2,3-diketo-5-methylthiopentyl-1-phosphate (DK-MTP-1-P). In Drosophila erecta (Fruit fly), this protein is Probable methylthioribulose-1-phosphate dehydratase.